The following is a 153-amino-acid chain: UPF0266 membrane protein YE1773 (153 aa).

The next 3 membrane-spanning stretches (helical) occupy residues 6 to 26 (IVLIVFIALLLAYAIYDEFIM), 45 to 65 (IDCAIFVGLIAILVYNNVMAN), and 67 to 87 (EPLTTYLLVGLALIAFYLSYI).

The protein belongs to the UPF0266 family.

Its subcellular location is the cell inner membrane. The protein is UPF0266 membrane protein YE1773 of Yersinia enterocolitica serotype O:8 / biotype 1B (strain NCTC 13174 / 8081).